The chain runs to 275 residues: Homeobox protein Hox-C12a (275 aa).

Disordered regions lie at residues 101–129 and 148–213; these read SRENCSGGGSLKREDRARDTSALTSDHGM and QLTQ…KRKP. Residues 155 to 177 show a composition bias toward low complexity; that stretch reads SCQSMESDSSSSLLNEASKPSSS. Positions 178–194 are enriched in polar residues; the sequence is DTQTLVSPGSHTGTITA. A DNA-binding region (homeobox) is located at residues 207-266; sequence TRKKRKPYSKLQLAELEGEFMMNEFITRQRRRELSDRLNLSDQQVKIWFQNRRMKKKRLM.

It belongs to the Abd-B homeobox family.

Its subcellular location is the nucleus. Its function is as follows. Sequence-specific transcription factor which is part of a developmental regulatory system that provides cells with specific positional identities on the anterior-posterior axis. The protein is Homeobox protein Hox-C12a (hoxc12a) of Takifugu rubripes (Japanese pufferfish).